Reading from the N-terminus, the 246-residue chain is Large ribosomal subunit protein uL3 (246 aa).

2 disordered regions span residues 140–162 (SHRS…NKKM) and 215–246 (DVPL…EENA). Gln-151 carries the post-translational modification N5-methylglutamine. A compositionally biased stretch (low complexity) spans 234-246 (EAAPEAPASEENA).

It belongs to the universal ribosomal protein uL3 family. In terms of assembly, part of the 50S ribosomal subunit. Forms a cluster with proteins L14 and L19. Post-translationally, methylated by PrmB.

Functionally, one of the primary rRNA binding proteins, it binds directly near the 3'-end of the 23S rRNA, where it nucleates assembly of the 50S subunit. In Methylorubrum extorquens (strain PA1) (Methylobacterium extorquens), this protein is Large ribosomal subunit protein uL3.